The following is a 278-amino-acid chain: 4-deoxy-L-threo-5-hexosulose-uronate ketol-isomerase (278 aa).

Residues histidine 196, histidine 198, glutamate 203, and histidine 245 each contribute to the Zn(2+) site.

The protein belongs to the KduI family. It depends on Zn(2+) as a cofactor.

The enzyme catalyses 5-dehydro-4-deoxy-D-glucuronate = 3-deoxy-D-glycero-2,5-hexodiulosonate. It participates in glycan metabolism; pectin degradation; 2-dehydro-3-deoxy-D-gluconate from pectin: step 4/5. Functionally, catalyzes the isomerization of 5-dehydro-4-deoxy-D-glucuronate to 3-deoxy-D-glycero-2,5-hexodiulosonate. This Salmonella choleraesuis (strain SC-B67) protein is 4-deoxy-L-threo-5-hexosulose-uronate ketol-isomerase.